Consider the following 854-residue polypeptide: MSILILLESPGKISKISSILGKNYVVKASMGHFRDLDPKKMSIDFDNDFEPVYIVTKPDVVKNLKSAMKNIDLVYLAADEDREGEAIAQSLYDVLKPSNYKRLRFNAITKDAIMSAIKNAGDIDKNLVDAQKARRVLDRLFGYLISPILQRQIGGKLSAGRVQSVTVRIIIDKENEIKNFINKNADSSYFKVSGTFNGAKATLHESNDKKPFDLETAYKGKTAQIALINSENPNSKVVNFMKRCLKSQFFIHSVEDKMTTRSPAPPFTTSTLQQEANRKFGMSIDSTMKTAQKLYEGGYITYMRTDSVEISAEGHRDIKKIITDQYGADYYQKNLYKNKAANSQEAHEAIRPTHPELLTLEGEIEDAYQIKLYKLIWQRTIASQMKPAKIKVTIIQISISKYVEDKLNPFYYFQSQIETVVFPGFMKVYVESIDDPDTDNQITKNFTGKIPTVGSKVTMEEIIARQEYMRPPPRYSEASLVKKLEELGIGRPSTYVNTIKTIINREYVKITDVPGIKKDITIYSIKSENKKHIMEVYEDTDTILLGKENKKIVPTNLGITVNDFLMKYFPEFLDYKFTANMETDLDYVSTGTKNWVDIVQDFYDKLKPIVDELSKQKGLSQSSERLLGEDNDGNEITATKTKFGPVVRKKIGDKYVYAKIKDPLTLDTIKLSDAIKLLEYPKNLGQYKGFDVLLQKGDYGFYLSYNKENFSLGEIDDPEDINLDTAIKAIEAKKANNIAEFNLTENGKKIKAIVLNGKYGYYVQVTRNRIKKNYPIPKDLDPNNLTEQQILSIISVKKTYKKSAPKGGSKTIRKPSQTKYSQTKSTKSTKSTKSTNKKFVGKSAKKTTKKTTKK.

Residues 2–110 (SILILLESPG…KRLRFNAITK (109 aa)) form the Toprim domain. Mg(2+)-binding residues include glutamate 8 and aspartate 79. Positions 124-610 (DKNLVDAQKA…DFYDKLKPIV (487 aa)) constitute a Topo IA-type catalytic domain. Residues 158-163 (SAGRVQ) form an interaction with DNA region. Tyrosine 302 serves as the catalytic O-(5'-phospho-DNA)-tyrosine intermediate. Residues 802-854 (KSAPKGGSKTIRKPSQTKYSQTKSTKSTKSTKSTNKKFVGKSAKKTTKKTTKK) are disordered. Over residues 814 to 834 (KPSQTKYSQTKSTKSTKSTKS) the composition is skewed to low complexity. Basic residues predominate over residues 835–854 (TNKKFVGKSAKKTTKKTTKK).

This sequence belongs to the type IA topoisomerase family. The cofactor is Mg(2+).

Its subcellular location is the virion. It carries out the reaction ATP-independent breakage of single-stranded DNA, followed by passage and rejoining.. Its function is as follows. Releases the supercoiling and torsional tension of DNA, which is introduced during the DNA replication and transcription, by transiently cleaving and rejoining one strand of the DNA duplex. Introduces a single-strand break via transesterification at a target site in duplex DNA. The scissile phosphodiester is attacked by the catalytic tyrosine of the enzyme, resulting in the formation of a DNA-(5'-phosphotyrosyl)-enzyme intermediate and the expulsion of a 3'-OH DNA strand. The free DNA strand then undergoes passage around the unbroken strand, thus removing DNA supercoils. Finally, in the religation step, the DNA 3'-OH attacks the covalent intermediate to expel the active-site tyrosine and restore the DNA phosphodiester backbone. This Acanthamoeba polyphaga (Amoeba) protein is DNA topoisomerase 1 type prokaryotic (TOP1P).